Here is a 390-residue protein sequence, read N- to C-terminus: Protein phosphatase 1B (390 aa).

Residues 1 to 14 (MGAFLDKPKTEKHN) show a composition bias toward basic and acidic residues. Residues 1–20 (MGAFLDKPKTEKHNAHGAGN) are disordered. Gly2 carries the N-myristoyl glycine lipid modification. Lys12 is covalently cross-linked (Glycyl lysine isopeptide (Lys-Gly) (interchain with G-Cter in ISG15)). The PPM-type phosphatase domain maps to 23–295 (RYGLSSMQGW…DNMSIVLVCF (273 aa)). The Mn(2+) site is built by Asp60, Gly61, Asp243, and Asp286. Residues 371-390 (NPNKDNDGGAGDLEDSLVAL) form a disordered region. Ser386 bears the Phosphoserine mark.

It belongs to the PP2C family. Monomer. Interacts with PAK6. Interacts with the phosphorylated form of IKBKB/IKKB. The cofactor is Mg(2+). Mn(2+) serves as cofactor. In terms of processing, isgylation negatively regulates its activity. Post-translationally, N-myristoylation is essential for the recognition of its substrates for dephosphorylation.

The protein localises to the cytoplasm. It is found in the cytosol. The protein resides in the membrane. It catalyses the reaction O-phospho-L-seryl-[protein] + H2O = L-seryl-[protein] + phosphate. The catalysed reaction is O-phospho-L-threonyl-[protein] + H2O = L-threonyl-[protein] + phosphate. Enzyme with a broad specificity. Dephosphorylates PRKAA1 and PRKAA2. Inhibits TBK1-mediated antiviral signaling by dephosphorylating it at 'Ser-172'. Plays an important role in the termination of TNF-alpha-mediated NF-kappa-B activation through dephosphorylating and inactivating IKBKB/IKKB. This is Protein phosphatase 1B (Ppm1b) from Rattus norvegicus (Rat).